The primary structure comprises 237 residues: MTYSRALIKLSGEALMGDKPYGIDPEIVQSIAKDVSKVVENGTQIAIVVGGGNIFRGLKGSAAGMDRATADYVGMLATVMNAITLQDGLERAGVPTRVQSAIDMQQIAEPYIRRRAIRHLEKGRVVVFGGGCGNPFFTTDTTAALRAAEINAEVVFKATKVDGVYDRDPKKFTDAVKYDNLTFQDVLANEIGVMDSTAIALCKDNKIPIVVFNIFQPGNIAKAISGEPIGSRISNSS.

Position 9–12 (9–12) interacts with ATP; that stretch reads KLSG. Gly-51 contributes to the UMP binding site. ATP-binding residues include Gly-52 and Arg-56. Residues Asp-71 and 132–139 contribute to the UMP site; that span reads CGNPFFTT. Thr-159, Tyr-165, and Asp-168 together coordinate ATP.

This sequence belongs to the UMP kinase family. Homohexamer.

The protein localises to the cytoplasm. The enzyme catalyses UMP + ATP = UDP + ADP. It participates in pyrimidine metabolism; CTP biosynthesis via de novo pathway; UDP from UMP (UMPK route): step 1/1. Inhibited by UTP. Its function is as follows. Catalyzes the reversible phosphorylation of UMP to UDP. The protein is Uridylate kinase of Prochlorococcus marinus (strain NATL1A).